The chain runs to 331 residues: tRNA (guanine-N(7)-)-methyltransferase (331 aa).

Positions 29, 55, and 105 each coordinate S-adenosyl-L-methionine. Residue Asp105 is part of the active site. Positions 109 and 141 each coordinate substrate.

This sequence belongs to the class I-like SAM-binding methyltransferase superfamily. TrmB family.

The catalysed reaction is guanosine(46) in tRNA + S-adenosyl-L-methionine = N(7)-methylguanosine(46) in tRNA + S-adenosyl-L-homocysteine. It functions in the pathway tRNA modification; N(7)-methylguanine-tRNA biosynthesis. In terms of biological role, catalyzes the formation of N(7)-methylguanine at position 46 (m7G46) in tRNA. This Deinococcus geothermalis (strain DSM 11300 / CIP 105573 / AG-3a) protein is tRNA (guanine-N(7)-)-methyltransferase.